We begin with the raw amino-acid sequence, 267 residues long: 2-keto-3-deoxy-L-rhamnonate aldolase (267 aa).

Histidine 49 serves as the catalytic Proton acceptor. Glutamine 151 is a binding site for substrate. Glutamate 153 is a binding site for Mg(2+). Alanine 178 and aspartate 179 together coordinate substrate. Mg(2+) is bound at residue aspartate 179.

This sequence belongs to the HpcH/HpaI aldolase family. KDR aldolase subfamily. In terms of assembly, homohexamer. Mg(2+) is required as a cofactor.

It catalyses the reaction 2-dehydro-3-deoxy-L-rhamnonate = (S)-lactaldehyde + pyruvate. Functionally, catalyzes the reversible retro-aldol cleavage of 2-keto-3-deoxy-L-rhamnonate (KDR) to pyruvate and lactaldehyde. This Shigella sonnei (strain Ss046) protein is 2-keto-3-deoxy-L-rhamnonate aldolase.